A 258-amino-acid polypeptide reads, in one-letter code: 5'-nucleotidase SurE (258 aa).

Asp18, Asp19, Ser49, and Asn102 together coordinate a divalent metal cation.

This sequence belongs to the SurE nucleotidase family. The cofactor is a divalent metal cation.

It localises to the cytoplasm. It carries out the reaction a ribonucleoside 5'-phosphate + H2O = a ribonucleoside + phosphate. Nucleotidase that shows phosphatase activity on nucleoside 5'-monophosphates. The protein is 5'-nucleotidase SurE of Vibrio campbellii (strain ATCC BAA-1116).